We begin with the raw amino-acid sequence, 397 residues long: Phosphoglycerate transport regulatory protein PgtC (397 aa).

Residues 1–24 (MFGSCQAYSRELVMATTFSPSATA) form the signal peptide. Residues 102-117 (TSVAVAVSGFGLLINR) traverse the membrane as a helical segment.

The protein resides in the cell membrane. Functionally, required for pgtP expression, it may act jointly with the PgtA/PgtB signaling proteins. The protein is Phosphoglycerate transport regulatory protein PgtC (pgtC) of Salmonella typhi.